The chain runs to 687 residues: Mitochondrial 15S rRNA processing factor ppr3 (687 aa).

Residues 1 to 49 (MLNKCSGSLTLLAVRRFCGPCRRLHYHKDNPNNINIAKNLLNNNIQARC) constitute a mitochondrion transit peptide. PPR repeat units follow at residues 262–296 (NGLVYQSYAIALSSLGKHKDLVALYSEQKSVSITP), 297–331 (SKDFLNACIKAFSRTKEFTKAWEVFNFMKFTATSI), 334–368 (SAETYGLMIQICSSQYNPEKALDLYNEMKLRPIDP), and 372–407 (TTFVINNLIHALATDVRFQTVAFSLLQDLSHYGLRP).

The protein belongs to the CCM1 family. Binds to mitochondrial small subunit 15S rRNA.

The protein localises to the mitochondrion. Functionally, regulates mitochondrial small subunit maturation by controlling 15S rRNA 5'-end processing. Localizes to the 5' precursor of the 15S rRNA in a position that is subsequently occupied by mS47 in the mature yeast mtSSU. Uses structure and sequence-specific RNA recognition, binding to a single-stranded region of the precursor and specifically recognizing bases -6 to -1. The exchange of Ccm1 for mS47 is coupled to the irreversible removal of precursor rRNA that is accompanied by conformational changes of the mitoribosomal proteins uS5m and mS26. These conformational changes signal completion of 5'-end rRNA processing through protection of the mature 5'-end of the 15S rRNA and stabilization of mS47. The removal of the 5' precursor together with the dissociation of Ccm1 may be catalyzed by the 5'-3' exoribonuclease Pet127. Involved in the specific removal of group I introns in mitochondrial encoded transcripts. This is Mitochondrial 15S rRNA processing factor ppr3 from Schizosaccharomyces pombe (strain 972 / ATCC 24843) (Fission yeast).